The primary structure comprises 190 residues: Holliday junction branch migration complex subunit RuvA (190 aa).

A domain I region spans residues 1–64; that stretch reads MIGKLTGTLL…EDAQLLYGFG (64 aa). The domain II stretch occupies residues 65–137; sequence TAQERQAFRE…LKGKLGADVG (73 aa). The flexible linker stretch occupies residues 137–141; that stretch reads GVRAH. A domain III region spans residues 142-190; the sequence is AANDNQADILQALLALGYNDKEAAAALKALPADVGVSEGIKLALKSLSK.

The protein belongs to the RuvA family. In terms of assembly, homotetramer. Forms an RuvA(8)-RuvB(12)-Holliday junction (HJ) complex. HJ DNA is sandwiched between 2 RuvA tetramers; dsDNA enters through RuvA and exits via RuvB. An RuvB hexamer assembles on each DNA strand where it exits the tetramer. Each RuvB hexamer is contacted by two RuvA subunits (via domain III) on 2 adjacent RuvB subunits; this complex drives branch migration. In the full resolvosome a probable DNA-RuvA(4)-RuvB(12)-RuvC(2) complex forms which resolves the HJ.

The protein localises to the cytoplasm. The RuvA-RuvB-RuvC complex processes Holliday junction (HJ) DNA during genetic recombination and DNA repair, while the RuvA-RuvB complex plays an important role in the rescue of blocked DNA replication forks via replication fork reversal (RFR). RuvA specifically binds to HJ cruciform DNA, conferring on it an open structure. The RuvB hexamer acts as an ATP-dependent pump, pulling dsDNA into and through the RuvAB complex. HJ branch migration allows RuvC to scan DNA until it finds its consensus sequence, where it cleaves and resolves the cruciform DNA. The polypeptide is Holliday junction branch migration complex subunit RuvA (Acidovorax sp. (strain JS42)).